We begin with the raw amino-acid sequence, 437 residues long: GTPase Era, mitochondrial (437 aa).

The N-terminal 20 residues, 1–20 (MAAPRRYCAGLVRALLGARQ), are a transit peptide targeting the mitochondrion. The region spanning 112–330 (RVLRVVLLGA…QYLLTQAQPG (219 aa)) is the Era-type G domain. A G1 region spans residues 120-127 (GAPNAGKS). Position 120-127 (120-127 (GAPNAGKS)) interacts with GTP. The interval 146 to 150 (HTTRC) is G2. The interval 167–170 (DTPG) is G3. A GTP-binding site is contributed by 167–171 (DTPGI). Residue Ser-173 is modified to Phosphoserine. GTP is bound at residue 236-239 (NKVD). The G4 stretch occupies residues 236–239 (NKVD). Positions 270-292 (LRSRSSTHCPGPETEGPNAHSVR) are disordered. The tract at residues 308-310 (LSA) is G5. The KH type-2 domain maps to 360 to 437 (LPEEVPYGVQ…LIRLSVKLLK (78 aa)).

Belongs to the TRAFAC class TrmE-Era-EngA-EngB-Septin-like GTPase superfamily. Era GTPase family.

Its subcellular location is the mitochondrion matrix. The protein resides in the mitochondrion inner membrane. Probable GTPase that plays a role in the mitochondrial ribosomal small subunit assembly. Specifically binds the 12S mitochondrial rRNA (12S mt-rRNA) to a 33 nucleotide section delineating the 3' terminal stem-loop region. May act as a chaperone that protects the 12S mt-rRNA on the 28S mitoribosomal subunit during ribosomal small subunit assembly. The protein is GTPase Era, mitochondrial (Eral1) of Mus musculus (Mouse).